Consider the following 150-residue polypeptide: Large ribosomal subunit protein bL9 (150 aa).

The protein belongs to the bacterial ribosomal protein bL9 family.

Binds to the 23S rRNA. The polypeptide is Large ribosomal subunit protein bL9 (Latilactobacillus sakei subsp. sakei (strain 23K) (Lactobacillus sakei subsp. sakei)).